The primary structure comprises 185 residues: Ribosome-recycling factor (185 aa).

It belongs to the RRF family.

It is found in the cytoplasm. Its function is as follows. Responsible for the release of ribosomes from messenger RNA at the termination of protein biosynthesis. May increase the efficiency of translation by recycling ribosomes from one round of translation to another. The polypeptide is Ribosome-recycling factor (Pseudomonas putida (strain ATCC 700007 / DSM 6899 / JCM 31910 / BCRC 17059 / LMG 24140 / F1)).